The sequence spans 787 residues: Mitochondrial intermediate peptidase (787 aa).

A mitochondrion-targeting transit peptide spans 1–36; sequence MQNKVLRGILFKNVPLGYSYNRSIRHPTFGNSIIRW. Residue His-573 participates in Zn(2+) binding. Glu-574 is a catalytic residue. Positions 577 and 580 each coordinate Zn(2+).

It belongs to the peptidase M3 family. Zn(2+) serves as cofactor.

The protein resides in the mitochondrion matrix. It carries out the reaction Release of an N-terminal octapeptide as second stage of processing of some proteins imported into the mitochondrion.. Cleaves proteins, imported into the mitochondrion, to their mature size. While most mitochondrial precursor proteins are processed to the mature form in one step by mitochondrial processing peptidase (MPP), the sequential cleavage by MIP of an octapeptide after initial processing by MPP is a required step for a subgroup of nuclear-encoded precursor proteins destined for the matrix or the inner membrane. The protein is Mitochondrial intermediate peptidase (OCT1) of Vanderwaltozyma polyspora (strain ATCC 22028 / DSM 70294 / BCRC 21397 / CBS 2163 / NBRC 10782 / NRRL Y-8283 / UCD 57-17) (Kluyveromyces polysporus).